Consider the following 288-residue polypeptide: Ribonuclease HIII (288 aa).

In terms of domain architecture, RNase H type-2 spans 76-288 (YSAIGSDEVG…KNITKQFIKN (213 aa)). A divalent metal cation is bound by residues D82, E83, and D185.

The protein belongs to the RNase HII family. RnhC subfamily. Mn(2+) is required as a cofactor. It depends on Mg(2+) as a cofactor.

The protein resides in the cytoplasm. The catalysed reaction is Endonucleolytic cleavage to 5'-phosphomonoester.. Endonuclease that specifically degrades the RNA of RNA-DNA hybrids. This is Ribonuclease HIII from Phytoplasma mali (strain AT).